Here is a 130-residue protein sequence, read N- to C-terminus: MAPKAEKKPASKAPAEKKPAAKKTASTDGAKKRTKARKETYSSYIYKVLKQTHPDTGISQKAMSIMNSFVNDIFERIASEASKLAAYNKKSTISAREIQTAVRLILPGELAKHAVSEGTRAVTKYSSASN.

A compositionally biased stretch (basic and acidic residues) spans 1 to 19; that stretch reads MAPKAEKKPASKAPAEKKP. Residues 1-38 form a disordered region; that stretch reads MAPKAEKKPASKAPAEKKPAAKKTASTDGAKKRTKARK. N6-acetyllysine; alternate occurs at positions 7 and 8. Glycyl lysine isopeptide (Lys-Gly) (interchain with G-Cter in SUMO); alternate cross-links involve residues Lys7 and Lys8. Ser11 carries the phosphoserine modification. An N6-acetyllysine modification is found at Lys12. At Lys17 the chain carries N6-acetyllysine; alternate. Residue Lys17 forms a Glycyl lysine isopeptide (Lys-Gly) (interchain with G-Cter in SUMO); alternate linkage. A Glycyl lysine isopeptide (Lys-Gly) (interchain with G-Cter in SUMO) cross-link involves residue Lys18. Lys124 is covalently cross-linked (Glycyl lysine isopeptide (Lys-Gly) (interchain with G-Cter in ubiquitin)).

The protein belongs to the histone H2B family. As to quaternary structure, the nucleosome is a histone octamer containing two molecules each of H2A, H2B, H3 and H4 assembled in one H3-H4 heterotetramer and two H2A-H2B heterodimers. The octamer wraps approximately 147 bp of DNA. Monoubiquitinated by the UBC2-BRE1 complex to form H2BK123ub1. H2BK123ub1 gives a specific tag for epigenetic transcriptional activation and is also prerequisite for H3K4me and H3K79me formation. H2BK123ub1 also modulates the formation of double-strand breaks during meiosis and is a prerequisite for DNA-damage checkpoint activation. Post-translationally, phosphorylated by STE20 to form H2BS10ph during progression through meiotic prophase. May be correlated with chromosome condensation. In terms of processing, acetylated by GCN5 to form H2BK11ac and H2BK16ac. H2BK16ac can also be formed by ESA1. Acetylation of N-terminal lysines and particularly formation of H2BK11acK16ac has a positive effect on transcription. Sumoylation to form H2BK6su or H2BK7su, and probably also H2BK16su or H2BK17su, occurs preferentially near the telomeres and represses gene transcription.

The protein resides in the nucleus. Its subcellular location is the chromosome. Functionally, core component of nucleosome. Nucleosomes wrap and compact DNA into chromatin, limiting DNA accessibility to the cellular machineries which require DNA as a template. Histones thereby play a central role in transcription regulation, DNA repair, DNA replication and chromosomal stability. DNA accessibility is regulated via a complex set of post-translational modifications of histones, also called histone code, and nucleosome remodeling. The polypeptide is Histone H2B.2 (HTB2) (Candida albicans (strain SC5314 / ATCC MYA-2876) (Yeast)).